A 389-amino-acid polypeptide reads, in one-letter code: uncharacterized protein (389 aa).

The signal sequence occupies residues 1-23 (MHFAKLGAIGLLGSIICAYAASA).

This sequence belongs to the IUNH family.

The protein resides in the endoplasmic reticulum lumen. This is an uncharacterized protein from Schizosaccharomyces pombe (strain 972 / ATCC 24843) (Fission yeast).